We begin with the raw amino-acid sequence, 329 residues long: Signal recognition particle receptor FtsY (329 aa).

Residues 127–134, 209–213, and 273–276 contribute to the GTP site; these read GVNGVGKT, DTAGR, and TKLD.

It belongs to the GTP-binding SRP family. FtsY subfamily. In terms of assembly, part of the signal recognition particle protein translocation system, which is composed of SRP and FtsY.

The protein resides in the cell membrane. The protein localises to the cytoplasm. It catalyses the reaction GTP + H2O = GDP + phosphate + H(+). Functionally, involved in targeting and insertion of nascent membrane proteins into the cytoplasmic membrane. Acts as a receptor for the complex formed by the signal recognition particle (SRP) and the ribosome-nascent chain (RNC). The sequence is that of Signal recognition particle receptor FtsY from Bacillus subtilis (strain 168).